The primary structure comprises 231 residues: Putative histone H1.9 (231 aa).

One can recognise an H15 domain in the interval 113 to 177 (QKPSTSKVIL…GSAGSFTLGK (65 aa)). Serine 135 carries the post-translational modification Phosphoserine. The interval 177–214 (KKQASKSKLKVKRQRQQRWRSGQRPFGQHRSLLGSKQG) is disordered. Over residues 179 to 194 (QASKSKLKVKRQRQQR) the composition is skewed to basic residues.

Belongs to the histone H1/H5 family. In terms of tissue distribution, expressed exclusively in the testis.

It localises to the nucleus. The protein localises to the chromosome. Its function is as follows. DNA-binding protein that may be implicated in chromatin remodeling and/or transcriptional regulation during spermiogenesis, the process of spermatid maturation into spermatozoa. In Homo sapiens (Human), this protein is Putative histone H1.9.